We begin with the raw amino-acid sequence, 460 residues long: MANIARDIFKAYDIRGIVGKTLTDDAAYLIGRAIAAKAAEKGMTRIALGRDGRLSGPELMEHIQRGFTDSGIGVLNVGMVATPMLYFAAINECGGSGVMITGSHNPPDYNGFKMMLGGDTLAGEAIQELLAIVEKDGFVAADKQGNVTEKDISGEYHNHIVGHIKLKRPMKIAIDAGNGVGGAFAGKLYKGLGNEVTELFCDVDGTFPNHHPDPSKPKNLQDLIAALKNGDAEIGLAFDGDADRLGVVTKDGNIIYPDRQLMLFAQDVLNRNPGAKVIFDVKSTRLLAPWIKEHGGEAIMEKTGHSFIKSAMKKTGALVAGEMSGHIFFKERWFGFDDGLYAGARLLEILSASDNPSEVLNNLPQSISTPELNIALPEGSNGHQVIDELAAKAEFEGATEIITIDGLRVEFPDGFGLMRASNTTPILVLRFEADTQAAIERIQNQFKAVIESNPNLIWPL.

Catalysis depends on serine 103, which acts as the Phosphoserine intermediate. Serine 103 serves as a coordination point for Mg(2+). Substrate-binding positions include 103-104 (SH) and lysine 113. The Mg(2+) site is built by aspartate 239, aspartate 241, and aspartate 243. Residues 243–244 (DR), threonine 303, and 322–324 (EMS) each bind substrate.

It belongs to the phosphohexose mutase family. Mg(2+) serves as cofactor.

Its subcellular location is the cytoplasm. The catalysed reaction is alpha-D-glucose 1-phosphate = alpha-D-glucose 6-phosphate. Its function is as follows. This enzyme participates in both the breakdown and synthesis of glucose. This Neisseria meningitidis serogroup A / serotype 4A (strain DSM 15465 / Z2491) protein is Phosphoglucomutase (pgm).